A 642-amino-acid chain; its full sequence is Threonine--tRNA ligase (642 aa).

One can recognise a TGS domain in the interval 1 to 61 (MPVITLPDGS…ENDAQLAIIT (61 aa)). Residues 243–534 (DHRKIGKQLD…LTEEFAGFFP (292 aa)) are catalytic. Position 286 is an N6-acetyllysine (K286). The Zn(2+) site is built by C334, H385, and H511.

Belongs to the class-II aminoacyl-tRNA synthetase family. Homodimer. Zn(2+) serves as cofactor.

It is found in the cytoplasm. The enzyme catalyses tRNA(Thr) + L-threonine + ATP = L-threonyl-tRNA(Thr) + AMP + diphosphate + H(+). Catalyzes the attachment of threonine to tRNA(Thr) in a two-step reaction: L-threonine is first activated by ATP to form Thr-AMP and then transferred to the acceptor end of tRNA(Thr). Also edits incorrectly charged L-seryl-tRNA(Thr). The sequence is that of Threonine--tRNA ligase from Escherichia fergusonii (strain ATCC 35469 / DSM 13698 / CCUG 18766 / IAM 14443 / JCM 21226 / LMG 7866 / NBRC 102419 / NCTC 12128 / CDC 0568-73).